The sequence spans 368 residues: Probable deoxyhypusine synthase (368 aa).

Residues 100–104 (SNLVS), 126–128 (TAG), Glu-132, and Asp-233 contribute to the NAD(+) site. 131–132 (EE) lines the spermidine pocket. Position 238 (Asp-238) interacts with spermidine. Residue Gly-278 participates in NAD(+) binding. Residue His-283 coordinates spermidine. Position 303–304 (303–304 (TA)) interacts with NAD(+). Spermidine is bound by residues 309–311 (GSD) and 318–324 (EAISWGK). Residue Lys-324 is the Nucleophile of the active site. Residue 337 to 338 (EA) participates in NAD(+) binding.

Belongs to the deoxyhypusine synthase family. The cofactor is NAD(+).

The enzyme catalyses [eIF5A protein]-L-lysine + spermidine = [eIF5A protein]-deoxyhypusine + propane-1,3-diamine. It functions in the pathway protein modification; eIF5A hypusination. Catalyzes the NAD-dependent oxidative cleavage of spermidine and the subsequent transfer of the butylamine moiety of spermidine to the epsilon-amino group of a specific lysine residue of the eIF-5A precursor protein to form the intermediate deoxyhypusine residue. The chain is Probable deoxyhypusine synthase from Drosophila melanogaster (Fruit fly).